Consider the following 147-residue polypeptide: 3-dehydroquinate dehydratase (147 aa).

Tyrosine 22 acts as the Proton acceptor in catalysis. 3 residues coordinate substrate: asparagine 74, histidine 80, and aspartate 87. Histidine 101 serves as the catalytic Proton donor. Residues isoleucine 102 to serine 103 and arginine 112 each bind substrate.

Belongs to the type-II 3-dehydroquinase family. As to quaternary structure, homododecamer.

It carries out the reaction 3-dehydroquinate = 3-dehydroshikimate + H2O. It functions in the pathway metabolic intermediate biosynthesis; chorismate biosynthesis; chorismate from D-erythrose 4-phosphate and phosphoenolpyruvate: step 3/7. Its function is as follows. Catalyzes a trans-dehydration via an enolate intermediate. This Lachnospira eligens (strain ATCC 27750 / DSM 3376 / VPI C15-48 / C15-B4) (Eubacterium eligens) protein is 3-dehydroquinate dehydratase.